We begin with the raw amino-acid sequence, 685 residues long: ABC transporter G family member 26 (685 aa).

Residues L65–I329 form the ABC transporter domain. G124–T131 provides a ligand contact to ATP. In terms of domain architecture, ABC transmembrane type-2 spans D414–Y623. A run of 6 helical transmembrane segments spans residues F432–W452, L468–F488, M518–F538, I542–A562, A576–Q596, and T648–Y668.

Belongs to the ABC transporter superfamily. ABCG family. Eye pigment precursor importer (TC 3.A.1.204) subfamily. Homo- or heterodimer. As to expression, mostly expressed in flowers, especially in tapetum within anthers.

Its subcellular location is the cell membrane. It is found in the endoplasmic reticulum membrane. Its function is as follows. Mediates the transport of sporopollenin precursors (e.g. polyketides) across the tapetum plasma membrane into the anther locule for polymerization on developing microspore walls, thus being required for male fertility and pollen exine formation and patterning prior to tapetum programmed cell death. The chain is ABC transporter G family member 26 from Arabidopsis thaliana (Mouse-ear cress).